The primary structure comprises 256 residues: Trans-aconitate 2-methyltransferase (256 aa).

It belongs to the methyltransferase superfamily. Tam family.

It localises to the cytoplasm. It catalyses the reaction trans-aconitate + S-adenosyl-L-methionine = (E)-3-(methoxycarbonyl)pent-2-enedioate + S-adenosyl-L-homocysteine. Functionally, catalyzes the S-adenosylmethionine monomethyl esterification of trans-aconitate. In Rhodopseudomonas palustris (strain BisB18), this protein is Trans-aconitate 2-methyltransferase.